The primary structure comprises 1040 residues: Multidrug resistance protein MdtB (1040 aa).

Helical transmembrane passes span 25 to 45 (LLMAAILLAGIIGYRFLPVAA), 347 to 367 (LMLAIALVVMIIYLFLRNIPA), 369 to 389 (IIPGVAVPLSLIGTFAVMVFL), 396 to 416 (LTLMALTIATGFVVDDAIVVI), 440 to 460 (IGFTIISLTFSLIAVLIPLLF), 472 to 492 (FAVTLAVAILISAVVSLTLTP), 537 to 557 (WLTLSVAFATLLLSVMLWIVI), 863 to 883 (LGSTVWLIVAAVVAMYIVLGV), 888 to 908 (FIHPITILSTLPTAGVGALLA), 910 to 930 (IIAGSELDIIAIIGIILLIGI), 968 to 988 (ILMTTLAALLGALPLMLSTGV), and 998 to 1018 (IAMVGGLLVSQVLTLFTTPVI).

It belongs to the resistance-nodulation-cell division (RND) (TC 2.A.6) family. MdtB subfamily. Part of a tripartite efflux system composed of MdtA, MdtB and MdtC. MdtB forms a heteromultimer with MdtC.

The protein localises to the cell inner membrane. The polypeptide is Multidrug resistance protein MdtB (Salmonella paratyphi B (strain ATCC BAA-1250 / SPB7)).